Here is a 275-residue protein sequence, read N- to C-terminus: Centromere protein V (275 aa).

Low complexity-rich tracts occupy residues 1–10 and 17–51; these read MRRSRSSAAA and RSGA…QAGS. Residues 1-109 form a disordered region; that stretch reads MRRSRSSAAA…ATPTSSASNL (109 aa). A phosphoserine mark is found at S18 and S21. R43 carries the post-translational modification Omega-N-methylarginine. The span at 79–100 shows a compositional bias: pro residues; sequence GEPPPPELALLPPPPPPPPTPA. Residues T98, T101, and T103 each carry the phosphothreonine modification. Residues 148 to 260 form the CENP-V/GFA domain; the sequence is HTGGCHCGAV…TEEFNGSDWE (113 aa). Positions 152, 154, 172, 174, 177, 216, and 219 each coordinate Zn(2+). S257 is subject to Phosphoserine.

Belongs to the Gfa family. It depends on Zn(2+) as a cofactor.

The protein resides in the chromosome. The protein localises to the centromere. Its subcellular location is the kinetochore. It is found in the nucleus. It localises to the cytoplasm. The protein resides in the cytoskeleton. The protein localises to the spindle. Functionally, required for distribution of pericentromeric heterochromatin in interphase nuclei and for centromere formation and organization, chromosome alignment and cytokinesis. The polypeptide is Centromere protein V (CENPV) (Homo sapiens (Human)).